Reading from the N-terminus, the 540-residue chain is Glucose-6-phosphate isomerase (540 aa).

Glu-350 (proton donor) is an active-site residue. Active-site residues include His-381 and Lys-503.

The protein belongs to the GPI family.

It localises to the cytoplasm. It catalyses the reaction alpha-D-glucose 6-phosphate = beta-D-fructose 6-phosphate. Its pathway is carbohydrate biosynthesis; gluconeogenesis. It functions in the pathway carbohydrate degradation; glycolysis; D-glyceraldehyde 3-phosphate and glycerone phosphate from D-glucose: step 2/4. In terms of biological role, catalyzes the reversible isomerization of glucose-6-phosphate to fructose-6-phosphate. This is Glucose-6-phosphate isomerase from Burkholderia orbicola (strain MC0-3).